Here is a 393-residue protein sequence, read N- to C-terminus: Elongation factor Tu (393 aa).

One can recognise a tr-type G domain in the interval Lys6–Arg204. The segment at Gly15–Thr22 is G1. Residue Gly15–Thr22 coordinates GTP. Thr22 contributes to the Mg(2+) binding site. The interval Gly58–Ser62 is G2. A G3 region spans residues Asp79–Gly82. Residues Asp79 to His83 and Asn134 to Asp137 contribute to the GTP site. A G4 region spans residues Asn134–Asp137. Residues Ser172–Val174 form a G5 region.

This sequence belongs to the TRAFAC class translation factor GTPase superfamily. Classic translation factor GTPase family. EF-Tu/EF-1A subfamily. In terms of assembly, monomer.

It is found in the cytoplasm. It carries out the reaction GTP + H2O = GDP + phosphate + H(+). In terms of biological role, GTP hydrolase that promotes the GTP-dependent binding of aminoacyl-tRNA to the A-site of ribosomes during protein biosynthesis. This is Elongation factor Tu from Anaplasma marginale (strain St. Maries).